The sequence spans 100 residues: MINEERLLKVLRGPLISEKATMAAEGNNTIVFKVAINATKKEIKAAVEKLFEVEVKSVNTLITKGKTKRQGLRQGRRSDVKKAYVILKEGQDLDFVGGAE.

It belongs to the universal ribosomal protein uL23 family. In terms of assembly, part of the 50S ribosomal subunit. Contacts protein L29, and trigger factor when it is bound to the ribosome.

In terms of biological role, one of the early assembly proteins it binds 23S rRNA. One of the proteins that surrounds the polypeptide exit tunnel on the outside of the ribosome. Forms the main docking site for trigger factor binding to the ribosome. The polypeptide is Large ribosomal subunit protein uL23 (Aliivibrio fischeri (strain MJ11) (Vibrio fischeri)).